The chain runs to 141 residues: Small ribosomal subunit protein uS8 (141 aa).

The protein belongs to the universal ribosomal protein uS8 family. In terms of assembly, part of the 30S ribosomal subunit. Contacts proteins S5 and S12.

Its function is as follows. One of the primary rRNA binding proteins, it binds directly to 16S rRNA central domain where it helps coordinate assembly of the platform of the 30S subunit. The polypeptide is Small ribosomal subunit protein uS8 (Mycoplasma genitalium (strain ATCC 33530 / DSM 19775 / NCTC 10195 / G37) (Mycoplasmoides genitalium)).